The sequence spans 377 residues: Nitric oxide reductase FlRd-NAD(+) reductase (377 aa).

It belongs to the FAD-dependent oxidoreductase family. FAD serves as cofactor.

It localises to the cytoplasm. The enzyme catalyses 2 reduced [nitric oxide reductase rubredoxin domain] + NAD(+) + H(+) = 2 oxidized [nitric oxide reductase rubredoxin domain] + NADH. Its pathway is nitrogen metabolism; nitric oxide reduction. Functionally, one of at least two accessory proteins for anaerobic nitric oxide (NO) reductase. Reduces the rubredoxin moiety of NO reductase. The polypeptide is Nitric oxide reductase FlRd-NAD(+) reductase (Escherichia coli O157:H7).